The chain runs to 306 residues: RNA pseudouridylate synthase domain-containing protein 1 (306 aa).

Residue methionine 1 is modified to N-acetylmethionine. Residue aspartate 67 is part of the active site. The segment at 255 to 290 is disordered; sequence RTDPDPDPMSGGPRPCSPSTPQPRPGRPPPETEAQR. Residues 269-285 are compositionally biased toward pro residues; the sequence is PCSPSTPQPRPGRPPPE.

This sequence belongs to the pseudouridine synthase RluA family.

The protein is RNA pseudouridylate synthase domain-containing protein 1 (Rpusd1) of Mus musculus (Mouse).